The sequence spans 380 residues: tRNA(Met) cytidine acetate ligase (380 aa).

Residues isoleucine 7–glutamine 20, glycine 101, asparagine 151, and arginine 176 each bind ATP.

The protein belongs to the TmcAL family.

The protein localises to the cytoplasm. The catalysed reaction is cytidine(34) in elongator tRNA(Met) + acetate + ATP = N(4)-acetylcytidine(34) in elongator tRNA(Met) + AMP + diphosphate. Catalyzes the formation of N(4)-acetylcytidine (ac(4)C) at the wobble position of elongator tRNA(Met), using acetate and ATP as substrates. First activates an acetate ion to form acetyladenylate (Ac-AMP) and then transfers the acetyl group to tRNA to form ac(4)C34. The protein is tRNA(Met) cytidine acetate ligase of Ligilactobacillus salivarius (strain UCC118) (Lactobacillus salivarius).